We begin with the raw amino-acid sequence, 102 residues long: Integration host factor subunit beta (102 aa).

Residues 54–102 form a disordered region; sequence HHRPARMGRNPKTGEPVALPAKYVPHFKPGKELRERVNSSRHQAPLRSQ. Positions 82–91 are enriched in basic and acidic residues; sequence PGKELRERVN. Polar residues predominate over residues 93-102; sequence SRHQAPLRSQ.

The protein belongs to the bacterial histone-like protein family. In terms of assembly, heterodimer of an alpha and a beta chain.

In terms of biological role, this protein is one of the two subunits of integration host factor, a specific DNA-binding protein that functions in genetic recombination as well as in transcriptional and translational control. This is Integration host factor subunit beta from Halorhodospira halophila (strain DSM 244 / SL1) (Ectothiorhodospira halophila (strain DSM 244 / SL1)).